Reading from the N-terminus, the 220-residue chain is Peptide methionine sulfoxide reductase MsrA (220 aa).

C54 is a catalytic residue.

Belongs to the MsrA Met sulfoxide reductase family.

It carries out the reaction L-methionyl-[protein] + [thioredoxin]-disulfide + H2O = L-methionyl-(S)-S-oxide-[protein] + [thioredoxin]-dithiol. The enzyme catalyses [thioredoxin]-disulfide + L-methionine + H2O = L-methionine (S)-S-oxide + [thioredoxin]-dithiol. In terms of biological role, has an important function as a repair enzyme for proteins that have been inactivated by oxidation. Catalyzes the reversible oxidation-reduction of methionine sulfoxide in proteins to methionine. The protein is Peptide methionine sulfoxide reductase MsrA of Salinispora arenicola (strain CNS-205).